Reading from the N-terminus, the 368-residue chain is High affinity iron permease 1 (368 aa).

Helical transmembrane passes span Val-8–Leu-28, Val-50–Ala-70, Ile-86–Met-106, Ala-142–Ile-162, Ser-173–Tyr-193, Phe-204–Val-224, and Ser-287–Phe-307. Residues Asp-346–Ala-368 are disordered. Over residues Ala-353 to Ala-368 the composition is skewed to basic and acidic residues.

This sequence belongs to the oxidase-dependent Fe transporter (OFeT) (TC 9.A.10.1) family.

It localises to the cell membrane. Its function is as follows. High affinity iron permease required for iron uptake in iron-depleted environments. Required for full virulence in mice. The polypeptide is High affinity iron permease 1 (Rhizopus delemar (strain RA 99-880 / ATCC MYA-4621 / FGSC 9543 / NRRL 43880) (Mucormycosis agent)).